The sequence spans 130 residues: Small ribosomal subunit protein uS8 (130 aa).

This sequence belongs to the universal ribosomal protein uS8 family. As to quaternary structure, part of the 30S ribosomal subunit.

Its function is as follows. One of the primary rRNA binding proteins, it binds directly to 16S rRNA central domain where it helps coordinate assembly of the platform of the 30S subunit. The protein is Small ribosomal subunit protein uS8 of Methanocella arvoryzae (strain DSM 22066 / NBRC 105507 / MRE50).